Reading from the N-terminus, the 375-residue chain is Lipid-A-disaccharide synthase (375 aa).

The protein belongs to the LpxB family.

The catalysed reaction is a lipid X + a UDP-2-N,3-O-bis[(3R)-3-hydroxyacyl]-alpha-D-glucosamine = a lipid A disaccharide + UDP + H(+). The protein operates within bacterial outer membrane biogenesis; LPS lipid A biosynthesis. Condensation of UDP-2,3-diacylglucosamine and 2,3-diacylglucosamine-1-phosphate to form lipid A disaccharide, a precursor of lipid A, a phosphorylated glycolipid that anchors the lipopolysaccharide to the outer membrane of the cell. This is Lipid-A-disaccharide synthase from Pseudomonas putida (strain W619).